A 141-amino-acid chain; its full sequence is Hemoglobin subunit alpha-3 (141 aa).

The 141-residue stretch at 1-141 (VLSPADKTNV…VSTVLTSKYR (141 aa)) folds into the Globin domain. Residue histidine 58 coordinates O2. Histidine 87 is a heme b binding site.

Belongs to the globin family. Heterotetramer of two alpha chains and two beta chains. As to expression, red blood cells.

Involved in oxygen transport from the lung to the various peripheral tissues. This chain is Hemoglobin subunit alpha-3, found in Gorilla gorilla gorilla (Western lowland gorilla).